The following is a 232-amino-acid chain: Phosphatidylserine decarboxylase proenzyme (232 aa).

Residue serine 190 is the Schiff-base intermediate with substrate; via pyruvic acid of the active site. Pyruvic acid (Ser); by autocatalysis is present on serine 190.

This sequence belongs to the phosphatidylserine decarboxylase family. PSD-A subfamily. Heterodimer of a large membrane-associated beta subunit and a small pyruvoyl-containing alpha subunit. Pyruvate is required as a cofactor. Is synthesized initially as an inactive proenzyme. Formation of the active enzyme involves a self-maturation process in which the active site pyruvoyl group is generated from an internal serine residue via an autocatalytic post-translational modification. Two non-identical subunits are generated from the proenzyme in this reaction, and the pyruvate is formed at the N-terminus of the alpha chain, which is derived from the carboxyl end of the proenzyme. The post-translation cleavage follows an unusual pathway, termed non-hydrolytic serinolysis, in which the side chain hydroxyl group of the serine supplies its oxygen atom to form the C-terminus of the beta chain, while the remainder of the serine residue undergoes an oxidative deamination to produce ammonia and the pyruvoyl prosthetic group on the alpha chain.

Its subcellular location is the cell membrane. The catalysed reaction is a 1,2-diacyl-sn-glycero-3-phospho-L-serine + H(+) = a 1,2-diacyl-sn-glycero-3-phosphoethanolamine + CO2. It functions in the pathway phospholipid metabolism; phosphatidylethanolamine biosynthesis; phosphatidylethanolamine from CDP-diacylglycerol: step 2/2. Catalyzes the formation of phosphatidylethanolamine (PtdEtn) from phosphatidylserine (PtdSer). The chain is Phosphatidylserine decarboxylase proenzyme from Agrobacterium fabrum (strain C58 / ATCC 33970) (Agrobacterium tumefaciens (strain C58)).